Reading from the N-terminus, the 26-residue chain is Muscarinic toxin-like protein 1 (26 aa).

Belongs to the three-finger toxin family. Short-chain subfamily. Orphan group VIII (haditoxin) sub-subfamily. As to quaternary structure, homodimer; non-covalently linked. Expressed by the venom gland.

It localises to the secreted. Antagonist of muscle and neuronal nicotinic acetylcholine receptors (nAChR) with highest affinity for neuronal alpha-7/CHRNA7 nAChRs. This Naja naja (Indian cobra) protein is Muscarinic toxin-like protein 1.